The chain runs to 128 residues: Saitohin (128 aa).

A disordered region spans residues 77–128; that stretch reads SYSSEESSRNGAEQGRQLSIEGPFQGQNCPSHPAAALPLPMRGESQATSCQV.

Interacts with PRDX6. In terms of tissue distribution, highest expression in placenta, muscle, fetal brain, and adult brain, with lower expression in heart, kidney, stomach, testis, and adrenal gland. In the central nervous system, highest expression is in temporal lobe, hypothalamus, medulla and spinal cord, with lower expression in other brain regions.

It localises to the cytoplasm. It is found in the nucleus. The chain is Saitohin (STH) from Homo sapiens (Human).